The chain runs to 200 residues: NADH-quinone oxidoreductase subunit I (200 aa).

4Fe-4S ferredoxin-type domains lie at 73–102 and 112–141; these read RLLE…METT and LNYS…HGGD. [4Fe-4S] cluster is bound by residues cysteine 82, cysteine 85, cysteine 88, cysteine 92, cysteine 121, cysteine 124, cysteine 127, and cysteine 131.

It belongs to the complex I 23 kDa subunit family. In terms of assembly, NDH-1 is composed of 14 different subunits. Subunits NuoA, H, J, K, L, M, N constitute the membrane sector of the complex. It depends on [4Fe-4S] cluster as a cofactor.

The protein localises to the cell inner membrane. It carries out the reaction a quinone + NADH + 5 H(+)(in) = a quinol + NAD(+) + 4 H(+)(out). In terms of biological role, NDH-1 shuttles electrons from NADH, via FMN and iron-sulfur (Fe-S) centers, to quinones in the respiratory chain. The immediate electron acceptor for the enzyme in this species is believed to be ubiquinone. Couples the redox reaction to proton translocation (for every two electrons transferred, four hydrogen ions are translocated across the cytoplasmic membrane), and thus conserves the redox energy in a proton gradient. This Campylobacter hominis (strain ATCC BAA-381 / DSM 21671 / CCUG 45161 / LMG 19568 / NCTC 13146 / CH001A) protein is NADH-quinone oxidoreductase subunit I.